The sequence spans 255 residues: Hydroxyacylglutathione hydrolase (255 aa).

Zn(2+)-binding residues include His53, His55, Asp57, His58, His110, Asp127, and His165.

It belongs to the metallo-beta-lactamase superfamily. Glyoxalase II family. As to quaternary structure, monomer. The cofactor is Zn(2+).

It carries out the reaction an S-(2-hydroxyacyl)glutathione + H2O = a 2-hydroxy carboxylate + glutathione + H(+). Its pathway is secondary metabolite metabolism; methylglyoxal degradation; (R)-lactate from methylglyoxal: step 2/2. In terms of biological role, thiolesterase that catalyzes the hydrolysis of S-D-lactoyl-glutathione to form glutathione and D-lactic acid. The sequence is that of Hydroxyacylglutathione hydrolase from Xanthomonas axonopodis pv. citri (strain 306).